A 78-amino-acid chain; its full sequence is UPF0291 protein Ldb1355 (78 aa).

It belongs to the UPF0291 family.

It is found in the cytoplasm. This is UPF0291 protein Ldb1355 from Lactobacillus delbrueckii subsp. bulgaricus (strain ATCC 11842 / DSM 20081 / BCRC 10696 / JCM 1002 / NBRC 13953 / NCIMB 11778 / NCTC 12712 / WDCM 00102 / Lb 14).